A 482-amino-acid polypeptide reads, in one-letter code: Protein DETOXIFICATION 9 (482 aa).

A run of 12 helical transmembrane segments spans residues 32-49 (VASMAAPMVAVNMSQYLL), 64-84 (ALAGIALGSSFANVTGFGVLF), 111-131 (FTSIVFLLIISVPISILWMFM), 144-164 (IAELAGVYCLWLVPALFGYSV), 180-200 (PMVLSSLAALSFHVPLCWLMV), 209-229 (GAAASIGISYWLNAVFLWVYM), 261-281 (AMMCCLEWLAFEVITLLSGLL), 289-309 (SVISICLTTSSLHYNLVNGIG), 332-352 (AAAAIIIAAVESVIVSSSLFL), 374-394 (ITPILCISILMDSFLTVLSGI), 403-423 (IGAYVNITSYYVIGIPVGLLL), and 435-455 (WAGLVTGSTLQTLILFLVIGF).

Belongs to the multi antimicrobial extrusion (MATE) (TC 2.A.66.1) family.

The protein localises to the membrane. In Arabidopsis thaliana (Mouse-ear cress), this protein is Protein DETOXIFICATION 9.